The primary structure comprises 361 residues: MTQITPQPGIMDIALYEGGASKVDGLDTVIKLSSNENPLGPSPAAIAAYKAAAGELHRYPSTDHAGLRGAIAEVYGLDPERIICGAGSDEIIAFLCQAYVGPGDEVIHTEHGFAMYRISTLAAGGTPVEVPERERVTDVDAILAGVTDRTRLVFIANPNNPTGTMIGGNALARLADGLPEGCLLVLDGAYAEYVPDYDAGKALVESRENVVMTRTFSKIYGLGALRVGWGYGPRHVIDVLNRVRGPFNLSTGALAAAEAAVRDRAYTETCRAENAKWRGWLASELAALGIPSDTSSANFVLARFASPEEAGACDDFLKARGIIVRRVSGYKLPAALRMTVGDAEGCRALVDAVAAFKAQAA.

Residue lysine 218 is modified to N6-(pyridoxal phosphate)lysine.

It belongs to the class-II pyridoxal-phosphate-dependent aminotransferase family. Histidinol-phosphate aminotransferase subfamily. Homodimer. Pyridoxal 5'-phosphate is required as a cofactor.

It carries out the reaction L-histidinol phosphate + 2-oxoglutarate = 3-(imidazol-4-yl)-2-oxopropyl phosphate + L-glutamate. It functions in the pathway amino-acid biosynthesis; L-histidine biosynthesis; L-histidine from 5-phospho-alpha-D-ribose 1-diphosphate: step 7/9. The protein is Histidinol-phosphate aminotransferase of Dinoroseobacter shibae (strain DSM 16493 / NCIMB 14021 / DFL 12).